The chain runs to 299 residues: 4-diphosphocytidyl-2-C-methyl-D-erythritol kinase (299 aa).

Residue K10 is part of the active site. Position 96-106 (96-106 (PVAGGMAGGSA)) interacts with ATP. Residue D138 is part of the active site.

Belongs to the GHMP kinase family. IspE subfamily.

The enzyme catalyses 4-CDP-2-C-methyl-D-erythritol + ATP = 4-CDP-2-C-methyl-D-erythritol 2-phosphate + ADP + H(+). It functions in the pathway isoprenoid biosynthesis; isopentenyl diphosphate biosynthesis via DXP pathway; isopentenyl diphosphate from 1-deoxy-D-xylulose 5-phosphate: step 3/6. In terms of biological role, catalyzes the phosphorylation of the position 2 hydroxy group of 4-diphosphocytidyl-2C-methyl-D-erythritol. The protein is 4-diphosphocytidyl-2-C-methyl-D-erythritol kinase of Streptomyces coelicolor (strain ATCC BAA-471 / A3(2) / M145).